The following is a 521-amino-acid chain: Probable glycine dehydrogenase (decarboxylating) subunit 2 (521 aa).

Position 279 is an N6-(pyridoxal phosphate)lysine (K279).

The protein belongs to the GcvP family. C-terminal subunit subfamily. In terms of assembly, the glycine cleavage system is composed of four proteins: P, T, L and H. In this organism, the P 'protein' is a heterodimer of two subunits. Requires pyridoxal 5'-phosphate as cofactor.

It carries out the reaction N(6)-[(R)-lipoyl]-L-lysyl-[glycine-cleavage complex H protein] + glycine + H(+) = N(6)-[(R)-S(8)-aminomethyldihydrolipoyl]-L-lysyl-[glycine-cleavage complex H protein] + CO2. Its function is as follows. The glycine cleavage system catalyzes the degradation of glycine. The P protein binds the alpha-amino group of glycine through its pyridoxal phosphate cofactor; CO(2) is released and the remaining methylamine moiety is then transferred to the lipoamide cofactor of the H protein. This is Probable glycine dehydrogenase (decarboxylating) subunit 2 from Staphylothermus marinus (strain ATCC 43588 / DSM 3639 / JCM 9404 / F1).